We begin with the raw amino-acid sequence, 155 residues long: Small ribosomal subunit protein uS7c (155 aa).

The protein belongs to the universal ribosomal protein uS7 family. In terms of assembly, part of the 30S ribosomal subunit.

Its subcellular location is the plastid. It is found in the chloroplast. One of the primary rRNA binding proteins, it binds directly to 16S rRNA where it nucleates assembly of the head domain of the 30S subunit. This Butomus umbellatus (Flowering rush) protein is Small ribosomal subunit protein uS7c (rps7).